A 320-amino-acid chain; its full sequence is Ferrochelatase (320 aa).

Positions 194 and 275 each coordinate Fe cation.

This sequence belongs to the ferrochelatase family.

It localises to the cytoplasm. The catalysed reaction is heme b + 2 H(+) = protoporphyrin IX + Fe(2+). It functions in the pathway porphyrin-containing compound metabolism; protoheme biosynthesis; protoheme from protoporphyrin-IX: step 1/1. Its function is as follows. Catalyzes the ferrous insertion into protoporphyrin IX. In Xylella fastidiosa (strain 9a5c), this protein is Ferrochelatase.